Consider the following 632-residue polypeptide: Sporulenol synthase (632 aa).

Aspartate 377 (proton donor) is an active-site residue. PFTB repeat units follow at residues 395–436 (WERG…EDAA), 465–505 (IQRA…HACG), and 513–554 (IQKA…VQTA).

This sequence belongs to the terpene cyclase/mutase family.

It is found in the cell membrane. It carries out the reaction sporulenol = (R)-tetraprenyl-beta-curcumene + H2O. It participates in secondary metabolite biosynthesis; hopanoid biosynthesis. Functionally, catalyzes the cyclization of tetraprenyl beta-curcumene into sporulenol. This is Sporulenol synthase (sqhC) from Bacillus subtilis (strain 168).